The primary structure comprises 350 residues: Deoxyhypusine synthase-like protein (350 aa).

Belongs to the deoxyhypusine synthase family.

This Chlorobaculum parvum (strain DSM 263 / NCIMB 8327) (Chlorobium vibrioforme subsp. thiosulfatophilum) protein is Deoxyhypusine synthase-like protein.